The primary structure comprises 70 residues: Large ribosomal subunit protein eL38 (70 aa).

It belongs to the eukaryotic ribosomal protein eL38 family.

The protein is Large ribosomal subunit protein eL38 (RpL38) of Aedes aegypti (Yellowfever mosquito).